The primary structure comprises 261 residues: MLVHPQFDPVAIHLGSFGIHWYGLMYLIGFLAFLWLGRWRIAHQPWWGKAGWTKKNLDDALFYGALGVILGGRLGYALFYQHEYYLTHPHEILFLWQGGMSFHGGFLGVMVAMLLFAKRRGLTFFGIMDFVAPLVPVGLGAGRMGNFINGELWGRASDLPWAMVFPHVDSIARHPSQLYEFLLEGVALFILLWWYSSKPRARGSVSALFLIGYGSFRFLVEFTREPDSFLGLLSLGLSMGQWLSLPMVIAGVWLLIVSLRR.

Transmembrane regions (helical) follow at residues 17–37 (FGIH…LWLG), 60–80 (ALFY…ALFY), 92–112 (ILFL…VMVA), and 121–141 (GLTF…GLGA). An a 1,2-diacyl-sn-glycero-3-phospho-(1'-sn-glycerol)-binding site is contributed by Arg-143. The next 3 membrane-spanning stretches (helical) occupy residues 175-195 (PSQL…LWWY), 203-223 (GSVS…VEFT), and 237-257 (LSMG…LLIV).

Belongs to the Lgt family.

Its subcellular location is the cell inner membrane. The enzyme catalyses L-cysteinyl-[prolipoprotein] + a 1,2-diacyl-sn-glycero-3-phospho-(1'-sn-glycerol) = an S-1,2-diacyl-sn-glyceryl-L-cysteinyl-[prolipoprotein] + sn-glycerol 1-phosphate + H(+). Its pathway is protein modification; lipoprotein biosynthesis (diacylglyceryl transfer). Catalyzes the transfer of the diacylglyceryl group from phosphatidylglycerol to the sulfhydryl group of the N-terminal cysteine of a prolipoprotein, the first step in the formation of mature lipoproteins. The chain is Phosphatidylglycerol--prolipoprotein diacylglyceryl transferase from Methylobacillus flagellatus (strain ATCC 51484 / DSM 6875 / VKM B-1610 / KT).